The sequence spans 425 residues: MAPITTSRVEFDEIPTVVGIFSAFGLVFTVSLFAWICCQRRSAKSNKTPPYKFVHVLKGVDIYPENLSSKKKFGGDDKSEAKRKAALPNLSLHLDLEKRDLNGNFPKTNPKAGSSSDLENVTPKLFPETEKEAVSPESLKSSTSLTSEEKQEKLGTLFLSLEYNFEKKAFVVNIKEAQGLPAMDEQSMTSDPYIKMTILPEKKHKVKTRVLRKTLDPVFDETFTFYGVPYPHIQELSLHFTVLSFDRFSRDDVIGEVLVPLSGIELSDGKMLMTREIIKRNAKKSSGRGELLVSLCYQSTTNTLTVVVLKARHLPKSDVSGLSDPYVKVNLYHAKKRISKKKTHVKKCTPNAVFNELFVFDIPCESLEEISVEFLVLDSERGSRNEVIGRLVLGATAEGSGGGHWKEICDFPRRQIAKWHMLCDG.

Over 1–16 the chain is Vesicular; that stretch reads MAPITTSRVEFDEIPT. The helical transmembrane segment at 17 to 37 threads the bilayer; the sequence is VVGIFSAFGLVFTVSLFAWIC. Residues 38–425 lie on the Cytoplasmic side of the membrane; that stretch reads CQRRSAKSNK…IAKWHMLCDG (388 aa). Disordered stretches follow at residues 102–121 and 126–147; these read NGNF…LENV and FPET…SLTS. Residues 105-119 show a composition bias toward polar residues; it reads FPKTNPKAGSSSDLE. Serine 135 bears the Phosphoserine; by MAPK8 mark. Residues 137–146 are compositionally biased toward low complexity; that stretch reads ESLKSSTSLT. C2 domains are found at residues 153–274 and 287–420; these read KLGT…MLMT and GRGE…AKWH. 3 residues coordinate Ca(2+): aspartate 246, serine 249, and aspartate 252.

The protein belongs to the synaptotagmin family. As to quaternary structure, interacts with KIF1A; the interaction increases in presence of calcium and decreases when SYT4 is phosphorylated at Ser-135. It depends on Ca(2+) as a cofactor. Post-translationally, phosphorylation at Ser-135 by MAPK8/JNK1 reduces interaction with KIF1A and neuronal dense core vesicles mobility. In terms of tissue distribution, widely expressed. Expressed in the brain. Expressed in pituitary gland, cerebellum, cortex, hypothalamus and hippocampus.

It localises to the cytoplasmic vesicle. It is found in the secretory vesicle. The protein resides in the neuronal dense core vesicle membrane. Synaptotagmin family member which does not bind Ca(2+). Involved in neuronal dense core vesicles (DCVs) mobility through its interaction with KIF1A. Upon increased neuronal activity, phosphorylation by MAPK8/JNK1 destabilizes the interaction with KIF1A and captures DCVs to synapses. Plays a role in dendrite formation by melanocytes. This chain is Synaptotagmin-4 (Syt4), found in Rattus norvegicus (Rat).